Here is a 2197-residue protein sequence, read N- to C-terminus: MALPRLTGALRSFSNVTKQDNYNEEVADLKLKRSKLHEQALDFGLSWKKIVKFLNEKLEKNKMQTINEDLKDILQAAKQIVGTDNGNEAIESGAAFLFMTFHMTDSVGYTETKAIRQMFGPFPSSSATSACNATSRIISHFSQDDLTALVQATENQCNDRVVFGRNLAFSFDMHDLDHFDELPVNGEAQKTISLDYKKFLNEQFQEPYTPELKPVEKSNGSLLWCEVEKYLNATLKEMTEAPRVEDLCCTLYDMLASAKSGDELQDELFELLGPGGLDLIEKLLQNRITIVDRFLNSSSDHKFQVLQDNCKKILGENAKPNYGCQVTIQSEQEKQLMKQYRREEKRIARREKKAGEDGEVSGEGLLPFDPKELRLQREHALLNARSAPILGRQRDTEVEKIRYPHVYDSQAAARETSAFIAGAKMILPEGIQRENTKLYEEVRIPYSEPMPVGFEEKPVYIQDLDEVGQLAFKGMKRLNRIQSIVFDTAYNTNENMLICAPTGAGKTNIAMLTVLHEIRQHFHQGVLKKNEFKIVYVAPMKALAAEMTNYFSKRLEPLGIVVKELTGDMQLSKSEILRTQMLVTTPEKWDVVTRKSVGDVALSQIVKLLILDEVHLLHEDRGPVLESIVARTLRQVESTQSMIRILGLSATLPNYLDVATFLHVNPYIGLFYFDGRFRPVPLGQTFLGIKSANKMQQLNNMDEVCYESVLKQVKAGHQVMVFVHARNATVRTAMSLIERAKNSGQISCFLPTQGPEYGHALKQVQKSRNKQVRELFSDGFSIHHAGMLRQDRNLVENLFSNGHIKVLVCTATLAWGVNLPAHAVIIKGTQIYAAKRGSFVDLGILDVMQIFGRAGRPQFDKFGEGIIITTHDKLSHYLSLLTQQNPIESQFLESLADNLNAEIALGTVTNVEEAVKWMSYTYLYVRMRANPLAYGISHKAYQMDPTLRKHREQLLIEVGQKLDKARMIRFEERTGYFSSTDLGRTASHYYIKYNTIETFNELFDAHKTEGDIFAIVSKAEEFDQIKVREEEIEELDALLNNFCELSAPGGVENSYGKINILLQTYISRGEMDSFSLISDSAYVAQNAARIVRALFEIALRKRWPTMTYRLLNLSKVIDKRLWGWASPLRQFSVLPPHILTRLEEKNLTVDKLKDMRKDEIGHILHHVNIGLKVKQCVHQIPSVTMEASIQPITRTVLRVSLNIYPDFSWNDQVHGTVGEPWWIWVEDPTNDHIYHSEYFLALKKQVINKEAQLLVFTIPIFEPLPSQYYIRAVSDRWLGAEAVCIINFQHLILPERHPPHTELLDLQPLPVTALGCKAYEALYNFSHFNPVQTQIFHTLYHTDCNVLLGAPTGSGKTVAAELAIFRVFNKYPTSKAVYIAPLKALVRERMDDWKIRIEEKLGKKVIELTGDVTPDMKSIAKADLIVTTPEKWDGVSRSWQNRSYVQQVNILIIDEIHLLGEERGPVLEVIVSRTNFISSHTEKPVRIVGLSTALANARDLADWLNIKQMGLFNFRPSVRPVPLEVHIQGFPGQHYCPRMASMNKPAFQESHTHCPDRPCLLLPERMLSSMTKLELIAFLATEEDPKQWLNMDEQEMENIIATVRDSNLKLTLAFGIGMHHAGLHERDRKTVEELFVNCKVQVLIATSTLAWGVNFPAHLVIIKGTEYYDGKTRRYVDFPITDVLQMMGRAGRPQFDDQGKAVILVHDIKKDFYKKFLYEPFPVESSLLGVLSDHLNAEIAGGTITSKQDALDYITWTYFFRRLIMNPSYYNLGDVSQDAINKFLSHLIGQSLVELELSHCIEVGEDNRSIEPLTCGRIASYYYLKHKTVKMFKDRLKPECSTEELLSILSDAEEYTDLPVRHNEDHTNNELAKCLPIELNPHSFDSPHTKAHLLLQAHLSRAMLPCPDYDTDTKTVLDQALRVCQAMLDVAASQGWLVTTLNITHLIQMVIQGRWLKDSSLLTIPNIEQHHLHLFRKWKPPVKGPHAKCRTSIECLPELIHACEGKEHVFSSMVEKELQPAKTKQAWNFLSHLPVINVGISVKGSWDDSVEGHNELSISTLTADKRDENTWIKLHADQQYVLQVSLQRVHFEFHKVKHESHAVTPRFPKLKDEGWFLILGEVDKRELVAVKRVGFVRTHHEASISFFTPEAPGRYIFTLYLMSDCYLGLDQQYDIFLNVTKADISTQINTEVPDVST.

Residue Ser-12 is modified to Phosphoserine. Coiled-coil stretches lie at residues 18-80 (KQDN…AKQI) and 328-356 (IQSE…KAGE). A Helicase ATP-binding 1 domain is found at 487-670 (DTAYNTNENM…FLHVNPYIGL (184 aa)). 500–507 (APTGAGKT) lines the ATP pocket. Lys-573 is subject to N6-acetyllysine. Positions 612-615 (DEVH) match the DEVH box motif. One can recognise a Helicase C-terminal 1 domain in the interval 697 to 915 (QLNNMDEVCY…GTVTNVEEAV (219 aa)). The region spanning 979–1288 (STDLGRTASH…GAEAVCIINF (310 aa)) is the SEC63 1 domain. The Helicase ATP-binding 2 domain maps to 1337–1512 (HTLYHTDCNV…WLNIKQMGLF (176 aa)). 1350-1357 (APTGSGKT) contributes to the ATP binding site. Positions 1454-1457 (DEIH) match the DEIH box motif. The Helicase C-terminal 2 domain maps to 1565–1739 (RMLSSMTKLE…VLSDHLNAEI (175 aa)). An SEC63 2 domain is found at 1812–2175 (PLTCGRIASY…YLGLDQQYDI (364 aa)).

This sequence belongs to the helicase family. As to quaternary structure, identified in the ASCC complex that contains ASCC1, ASCC2 and ASCC3. Functions as a scaffolding subunit that interacts directly with both ASCC1 and ASCC2. Interacts directly with ALKBH3, and thereby recruits ALKBH3 to the ASCC complex. Part of the ASC-1/TRIP4 complex, that contains TRIP4, ASCC1, ASCC2 and ASCC3. Part of the RQT (ribosome quality control trigger) complex, that contains ASCC2, ASCC3 and TRIP4. Associates with ribosomes; recruited to collided ribosomes. Interacts with ZCCHC4. Interacts with ZNF598. Interacts with RPS3.

The protein localises to the nucleus. It is found in the nucleus speckle. It localises to the cytoplasm. Its subcellular location is the cytosol. It carries out the reaction Couples ATP hydrolysis with the unwinding of duplex DNA by translocating in the 3'-5' direction.. It catalyses the reaction ATP + H2O = ADP + phosphate + H(+). In terms of biological role, ATPase involved both in DNA repair and rescue of stalled ribosomes. 3'-5' DNA helicase involved in repair of alkylated DNA: promotes DNA unwinding to generate single-stranded substrate needed for ALKBH3, enabling ALKBH3 to process alkylated N3-methylcytosine (3mC) within double-stranded regions. Also involved in activation of the ribosome quality control (RQC) pathway, a pathway that degrades nascent peptide chains during problematic translation. Drives the splitting of stalled ribosomes that are ubiquitinated in a ZNF598-dependent manner, as part of the ribosome quality control trigger (RQT) complex. Part of the ASC-1 complex that enhances NF-kappa-B, SRF and AP1 transactivation. The polypeptide is Activating signal cointegrator 1 complex subunit 3 (Ascc3) (Rattus norvegicus (Rat)).